Reading from the N-terminus, the 162-residue chain is Small ribosomal subunit protein uS19 (162 aa).

Residues 1 to 27 (MAKQKKFSGKGSARSKRKQNRKQVGPR) show a composition bias toward basic residues. Positions 1-29 (MAKQKKFSGKGSARSKRKQNRKQVGPRRR) are disordered.

It belongs to the universal ribosomal protein uS19 family.

In terms of biological role, protein S19 forms a complex with S13 that binds strongly to the 16S ribosomal RNA. The protein is Small ribosomal subunit protein uS19 of Methanococcus aeolicus (strain ATCC BAA-1280 / DSM 17508 / OCM 812 / Nankai-3).